The primary structure comprises 90 residues: Alpha-latrotoxin associated low molecular weight protein (90 aa).

A signal peptide spans 1-18 (MNKLFFVVFLCLIISVLA).

Belongs to the arthropod CHH/MIH/GIH/VIH hormone family. As to expression, expressed by the venom gland.

It localises to the secreted. Its function is as follows. May increase the toxicity of alpha-latrotoxin and/or other venom components. Is non-toxic to mice and to the cockroach Periplaneta americana. This chain is Alpha-latrotoxin associated low molecular weight protein, found in Latrodectus geometricus (Brown widow spider).